Here is a 612-residue protein sequence, read N- to C-terminus: Poly(A) RNA polymerase, mitochondrial (612 aa).

A mitochondrion-targeting transit peptide spans 1 to 57 (MNSLVRRSAQQLSLWRTYCIKHNASEAASPGRNAGRPNYEEFIGRHQRQAQCSIVVQ). ATP contacts are provided by residues 83-89 (YCVRQDE) and 228-229 (GC). Residues D230 and D232 each contribute to the Mg(2+) site. Residues 427-463 (SLSELLLQFFEFYSQFDFHNRAISLNEGKPLSKPDHS) form the PAP-associated domain. Disordered stretches follow at residues 555–574 (AGAT…KSAS) and 588–612 (SELK…RRSR).

It belongs to the DNA polymerase type-B-like family. Mg(2+) serves as cofactor. The cofactor is Mn(2+).

Its subcellular location is the mitochondrion. The enzyme catalyses RNA(n) + ATP = RNA(n)-3'-adenine ribonucleotide + diphosphate. Its function is as follows. Polymerase that creates the 3' poly(A) tail of mitochondrial transcripts. This is not required for transcript stability or translation but may maintain mRNA integrity by protecting 3' termini from degradation. The chain is Poly(A) RNA polymerase, mitochondrial from Drosophila melanogaster (Fruit fly).